The sequence spans 281 residues: Pantothenate synthetase (281 aa).

Position 30 to 37 (30 to 37 (MGYLHEGH)) interacts with ATP. The active-site Proton donor is the His37. (R)-pantoate is bound at residue Gln61. Gln61 lines the beta-alanine pocket. Position 147 to 150 (147 to 150 (GEKD)) interacts with ATP. Gln153 is a (R)-pantoate binding site. ATP-binding positions include Ile176 and 184–187 (KSSR).

The protein belongs to the pantothenate synthetase family. As to quaternary structure, homodimer.

It localises to the cytoplasm. The enzyme catalyses (R)-pantoate + beta-alanine + ATP = (R)-pantothenate + AMP + diphosphate + H(+). It functions in the pathway cofactor biosynthesis; (R)-pantothenate biosynthesis; (R)-pantothenate from (R)-pantoate and beta-alanine: step 1/1. In terms of biological role, catalyzes the condensation of pantoate with beta-alanine in an ATP-dependent reaction via a pantoyl-adenylate intermediate. This Clostridium botulinum (strain ATCC 19397 / Type A) protein is Pantothenate synthetase.